Consider the following 163-residue polypeptide: SsrA-binding protein (163 aa).

It belongs to the SmpB family.

The protein resides in the cytoplasm. In terms of biological role, required for rescue of stalled ribosomes mediated by trans-translation. Binds to transfer-messenger RNA (tmRNA), required for stable association of tmRNA with ribosomes. tmRNA and SmpB together mimic tRNA shape, replacing the anticodon stem-loop with SmpB. tmRNA is encoded by the ssrA gene; the 2 termini fold to resemble tRNA(Ala) and it encodes a 'tag peptide', a short internal open reading frame. During trans-translation Ala-aminoacylated tmRNA acts like a tRNA, entering the A-site of stalled ribosomes, displacing the stalled mRNA. The ribosome then switches to translate the ORF on the tmRNA; the nascent peptide is terminated with the 'tag peptide' encoded by the tmRNA and targeted for degradation. The ribosome is freed to recommence translation, which seems to be the essential function of trans-translation. The protein is SsrA-binding protein of Shewanella baltica (strain OS223).